A 144-amino-acid polypeptide reads, in one-letter code: Large ribosomal subunit protein uL13 (144 aa).

It belongs to the universal ribosomal protein uL13 family. In terms of assembly, part of the 50S ribosomal subunit.

Functionally, this protein is one of the early assembly proteins of the 50S ribosomal subunit, although it is not seen to bind rRNA by itself. It is important during the early stages of 50S assembly. This chain is Large ribosomal subunit protein uL13, found in Nitratidesulfovibrio vulgaris (strain ATCC 29579 / DSM 644 / CCUG 34227 / NCIMB 8303 / VKM B-1760 / Hildenborough) (Desulfovibrio vulgaris).